Reading from the N-terminus, the 369-residue chain is Anhydro-N-acetylmuramic acid kinase (369 aa).

12–19 (GTSLDGVD) serves as a coordination point for ATP.

It belongs to the anhydro-N-acetylmuramic acid kinase family.

It carries out the reaction 1,6-anhydro-N-acetyl-beta-muramate + ATP + H2O = N-acetyl-D-muramate 6-phosphate + ADP + H(+). It participates in amino-sugar metabolism; 1,6-anhydro-N-acetylmuramate degradation. Its pathway is cell wall biogenesis; peptidoglycan recycling. Functionally, catalyzes the specific phosphorylation of 1,6-anhydro-N-acetylmuramic acid (anhMurNAc) with the simultaneous cleavage of the 1,6-anhydro ring, generating MurNAc-6-P. Is required for the utilization of anhMurNAc either imported from the medium or derived from its own cell wall murein, and thus plays a role in cell wall recycling. The sequence is that of Anhydro-N-acetylmuramic acid kinase from Shigella boydii serotype 4 (strain Sb227).